Here is a 108-residue protein sequence, read N- to C-terminus: Iron-sulfur cluster assembly protein CyaY (108 aa).

This sequence belongs to the frataxin family.

In terms of biological role, involved in iron-sulfur (Fe-S) cluster assembly. May act as a regulator of Fe-S biogenesis. The chain is Iron-sulfur cluster assembly protein CyaY from Burkholderia cenocepacia (strain ATCC BAA-245 / DSM 16553 / LMG 16656 / NCTC 13227 / J2315 / CF5610) (Burkholderia cepacia (strain J2315)).